A 323-amino-acid polypeptide reads, in one-letter code: Probable inactive poly [ADP-ribose] polymerase SRO2 (323 aa).

Residues serine 31 to valine 257 form the PARP catalytic domain. The RST domain occupies serine 250 to valine 321.

As to quaternary structure, interacts with STO.

The protein resides in the nucleus. In terms of biological role, probable inactive ADP-ribosyltransferase that may be involved in stress and developmental responses. The protein is Probable inactive poly [ADP-ribose] polymerase SRO2 (SRO2) of Arabidopsis thaliana (Mouse-ear cress).